The sequence spans 437 residues: Alpha-galactosidase 3 (437 aa).

A signal peptide spans 1-30 (MVIMKKMKDSVLFLVVGLFSLSVLVSQSIA). 2 disulfide bridges follow: Cys-85-Cys-117 and Cys-165-Cys-195. Asn-88 carries an N-linked (GlcNAc...) asparagine glycan. Substrate-binding positions include 115–116 (DD) and Lys-191. Asp-193 serves as the catalytic Nucleophile. Residue Asn-214 is glycosylated (N-linked (GlcNAc...) asparagine). Substrate is bound by residues 226 to 230 (EWGVD), Arg-244, and Asp-248. The Proton donor role is filled by Asp-248. N-linked (GlcNAc...) asparagine glycans are attached at residues Asn-250, Asn-315, and Asn-408.

The protein belongs to the glycosyl hydrolase 27 family. In terms of assembly, homodimer.

It is found in the secreted. Its subcellular location is the cell wall. It localises to the extracellular space. The protein resides in the apoplast. The protein localises to the vacuole. It carries out the reaction Hydrolysis of terminal, non-reducing alpha-D-galactose residues in alpha-D-galactosides, including galactose oligosaccharides, galactomannans and galactolipids.. In terms of biological role, may regulate leaf (and possibly other organ) development by functioning in cell wall loosening and cell wall expansion. In Arabidopsis thaliana (Mouse-ear cress), this protein is Alpha-galactosidase 3.